The following is a 1115-amino-acid chain: MFYPVKVGTRERWSYSRIREVLDMPNLIEIQQNSYQWFLDEGLREMFRDISPIQDFTGNLVLEFIDYSLGEPKYEVEECKERDVTYAAPLRVKVRLINKETGEVKEQEVFMGDFPLMTTKGTFIINGAERVIVSQLVRSPGVYYSESIDPSGKKVFGATVIPNRGAWLEFETDVNDNIFVRVDRTRKLPATVLIRALGYATNGQIAELFDDNEHIRITLERDNTESAEEALVEIYKRLRPGEPPTVDSARSLLEALFFDPKRYDLAKVGRYKLNKKLKLSVPTDVHHLTKEDIVASLRQMLTLMSGEGHKDDIDHLGNRRLRSVGELLQNQFRIGLSRMERVVRERMTIQDVDVITPQVLINIRPVVAAIKEFFGSSQLSQFMDQTNPLAELTHKRRLSALGPGGLSRERAGFEVRDVHHSHYGRMCPIETPEGPNIGLIGSLSTYGRINPYGFIEAPYRKVNNGQVTDQIDYLTADEEEKFVVAQANAPLTDDGHFIEEKIDGRHGPDFVLVAPERIDYMDVSPKQMVSIATALIPFLEHDDANRALMGANMQRQAVPLLRTDAPYVGTGMEYKAAKDSGVCVLASKDGTVERATAEDIIIRHDDGTLEKHKLLKYLRSNQGTCINQRPIVMKNERVEAGQIIADGPSTDHGELALGRNVLIAFMTWEGYNYEDAILISEKLVKEDYYTSIHIEEYEADARDTKLGPEEITRDIPNVGEDVLKDLDERGIIRIGAEVSTGDILVGKVTPKGETELTAEERLLRAIFGEKAREVRDTSLRVPHGEAGKIVDVKVFTRENGDELAPGVNELVRVYIAQKRKISVGDKMAGRHGNKGVISRIMKQEDMPFLPDGTPVEIVLNPLGVPSRMNIGQVMETHLGWAAKALGLRLATPVFDGAQEEDVFATLRKAGLPETGKTVLYDGRTGDPFDNKITVGYMYFLKLHHLVDDKIHARSTGPYSLVTQQPLGGKAQFGGQRFGEMEVWALEAYGAAYTLQEILTVKSDDVVGRVKTYEAIVKGENIPEPGVPESFKVLIKELQSLGLDVRVLSENDEEIEIREIDEDVTETAKELGIDLHEDLPAPVIHEAGEGEDDEYFEEDEEAVDDEPMTFDDDDME.

Positions 1084-1115 (HEAGEGEDDEYFEEDEEAVDDEPMTFDDDDME) are disordered. The span at 1088 to 1115 (EGEDDEYFEEDEEAVDDEPMTFDDDDME) shows a compositional bias: acidic residues.

This sequence belongs to the RNA polymerase beta chain family. The RNAP catalytic core consists of 2 alpha, 1 beta, 1 beta' and 1 omega subunit. When a sigma factor is associated with the core the holoenzyme is formed, which can initiate transcription.

It catalyses the reaction RNA(n) + a ribonucleoside 5'-triphosphate = RNA(n+1) + diphosphate. In terms of biological role, DNA-dependent RNA polymerase catalyzes the transcription of DNA into RNA using the four ribonucleoside triphosphates as substrates. In Desulfitobacterium hafniense (strain DSM 10664 / DCB-2), this protein is DNA-directed RNA polymerase subunit beta.